The chain runs to 294 residues: MHPRFQTAFAQLADNLQSALEPILADKYFPALLTGEQVSSLKSATGLDEDALAFALLPLAAACARTPLSNFNVGAIARGVSGTWYFGANMEFIGATMQQTVHAEQSAISHAWLSGEKALAAITVNYTPCGHCRQFMNELNSGLDLRIHLPGREAHALRDYLPDAFGPKDLEIKTLLMDEQDHGYALTGDALSQAAIAAANRSHMPYSKSPSGVALECKDGRIFSGSYAENAAFNPTLPPLQGALILLNLKGYDYPDIQRAVLAEKADAPLIQWDATSATLKALGCHNIDRVLLA.

CMP/dCMP-type deaminase domains are found at residues 48 to 168 (DEDA…FGPK) and 186 to 294 (LTGD…VLLA). Substrate is bound at residue 89 to 91 (NME). Position 102 (His-102) interacts with Zn(2+). The Proton donor role is filled by Glu-104. Cys-129 and Cys-132 together coordinate Zn(2+).

The protein belongs to the cytidine and deoxycytidylate deaminase family. As to quaternary structure, homodimer. The cofactor is Zn(2+).

The catalysed reaction is cytidine + H2O + H(+) = uridine + NH4(+). The enzyme catalyses 2'-deoxycytidine + H2O + H(+) = 2'-deoxyuridine + NH4(+). Its function is as follows. This enzyme scavenges exogenous and endogenous cytidine and 2'-deoxycytidine for UMP synthesis. This is Cytidine deaminase from Escherichia coli O17:K52:H18 (strain UMN026 / ExPEC).